The chain runs to 400 residues: PHD finger protein 24 (400 aa).

Gly-2 carries N-myristoyl glycine lipidation. Residues 28–38 (LRDRPSIRRTG) show a composition bias toward basic and acidic residues. The tract at residues 28–99 (LRDRPSIRRT…PEEFDRTSRF (72 aa)) is disordered. Arg-36 carries the omega-N-methylarginine modification. Ser-43 is modified (phosphoserine). Phosphothreonine is present on Thr-47. The residue at position 51 (Ser-51) is a Phosphoserine. Residues 78–97 (AWERLRDGRGVEPEEFDRTS) show a composition bias toward basic and acidic residues. The PHD-type zinc-finger motif lies at 129-190 (NDEMCDVCEV…TGWSCHYCDN (62 aa)).

This Homo sapiens (Human) protein is PHD finger protein 24.